The primary structure comprises 107 residues: Large ribosomal subunit protein uL24 (107 aa).

This sequence belongs to the universal ribosomal protein uL24 family. Part of the 50S ribosomal subunit.

One of two assembly initiator proteins, it binds directly to the 5'-end of the 23S rRNA, where it nucleates assembly of the 50S subunit. Its function is as follows. One of the proteins that surrounds the polypeptide exit tunnel on the outside of the subunit. The sequence is that of Large ribosomal subunit protein uL24 from Kosmotoga olearia (strain ATCC BAA-1733 / DSM 21960 / TBF 19.5.1).